The sequence spans 931 residues: MAWTEKDVENGKESESLGNNGFLKGGQSSSGSKGSPGRISHVKKIFEDKDAITYANILRSRNKFVDALAIYESVLEKDSKSIESLIGKGICLQMQNTGRLAFESFSEAIKVDPQNACALTHCGILYKDEGRLVEAAESYEKALKADPSYTPAAECLAIVLTDIGTSLKLAGNTQEGIQKYYEAIKIDSHYAPAYYNLGVVYSEMMQYDMALNCYEKAALERPMYAEAYCNMGVIFKNRGDLESAIACYERCLAVSPNFEIAKNNMAIALTDLGTKVKLEGDINQGVAYYKKALCYNWHYADAMYNLGVAYGEMLKFDMAIVFYELAFHFNPHCAEACNNLGVIYKDRDNLDKAVECYQLALSIKPNFSQSLNNLGVVYTVQGKMDAAASMIEKAIIANPTYAEAYNNLGVLYRDAGNISLAIEAYEQCLKIDPDSRNAGQNRLLAMNYINEGTDDKLYEAHRDWGRRFMKLYPQYTSWDNSKVPERPLVIGYVSPDYFTHSVSYFIEAPLAHHDYTNYKVVVYSSVVKADAKTNRFRDKVMKKGGLWRDIYGIDEKKVSSMIREDKVDIMVELTGHTANNKLGTMACRPAPVQVTWIGYPNTTGLPTIDYRITDAMADPPNAKQKHVEELVRLPNSFLCYTPSPEAGPVCPAPALSNGFVTFGSFNNLAKITPKVLKVWARILSAVPHSRLIVKCKPFCCDSVRQRFLSILEQLGLEPQRVDLLPLILLNHDHMQAYSLMDISLDTFPYAGTTTTCESLYMGVPCVTMGGSVHAHNVGVSLLKTVGLENLVARNEDEYVESAIQLASDVTSLSNLRMSLRELMSKSPLCDGAKFTRNIESIYRSMWRRYCDGDVPSLRRMELLQQQQTQTESVVPEESSVNPSERTITSAPTDGSIKENGFTAVPALALKSSTSEENGVQSNHNGNHGNLS.

Residues 1-15 (MAWTEKDVENGKESE) show a composition bias toward basic and acidic residues. A disordered region spans residues 1–38 (MAWTEKDVENGKESESLGNNGFLKGGQSSSGSKGSPGR). Low complexity predominate over residues 25–37 (GGQSSSGSKGSPG). TPR repeat units follow at residues 48 to 81 (DKDAITYANILRSRNKFVDALAIYESVLEKDSKS), 82 to 115 (IESLIGKGICLQMQNTGRLAFESFSEAIKVDPQN), 116 to 149 (ACALTHCGILYKDEGRLVEAAESYEKALKADPSY), 157 to 190 (AIVLTDIGTSLKLAGNTQEGIQKYYEAIKIDSHY), 191 to 224 (APAYYNLGVVYSEMMQYDMALNCYEKAALERPMY), 225 to 258 (AEAYCNMGVIFKNRGDLESAIACYERCLAVSPNF), 266 to 299 (AIALTDLGTKVKLEGDINQGVAYYKKALCYNWHY), 300 to 333 (ADAMYNLGVAYGEMLKFDMAIVFYELAFHFNPHC), 334 to 367 (AEACNNLGVIYKDRDNLDKAVECYQLALSIKPNF), 369 to 401 (QSLNNLGVVYTVQGKMDAAASMIEKAIIANPTY), and 402 to 435 (AEAYNNLGVLYRDAGNISLAIEAYEQCLKIDPDS). The segment at 436–931 (RNAGQNRLLA…NHNGNHGNLS (496 aa)) is catalytic region. Over residues 864–884 (QQQQTQTESVVPEESSVNPSE) the composition is skewed to low complexity. A disordered region spans residues 864 to 931 (QQQQTQTESV…NHNGNHGNLS (68 aa)). Polar residues predominate over residues 910-931 (KSSTSEENGVQSNHNGNHGNLS).

It belongs to the glycosyltransferase 41 family. O-GlcNAc transferase subfamily.

The protein resides in the nucleus. It catalyses the reaction L-seryl-[protein] + UDP-N-acetyl-alpha-D-glucosamine = 3-O-(N-acetyl-beta-D-glucosaminyl)-L-seryl-[protein] + UDP + H(+). It carries out the reaction L-threonyl-[protein] + UDP-N-acetyl-alpha-D-glucosamine = 3-O-(N-acetyl-beta-D-glucosaminyl)-L-threonyl-[protein] + UDP + H(+). It participates in protein modification; protein glycosylation. In terms of biological role, probable O-linked N-acetylglucosamine transferase (OGT) involved in various processes such as gibberellin (GA) signaling pathway. OGTs catalyze the addition of nucleotide-activated sugars directly onto the polypeptide through O-glycosidic linkage with the hydroxyl of serine or threonine. Probably acts by adding O-linked sugars to yet unknown proteins. The polypeptide is Probable UDP-N-acetylglucosamine--peptide N-acetylglucosaminyltransferase SPINDLY (SPY) (Solanum lycopersicum (Tomato)).